Here is a 57-residue protein sequence, read N- to C-terminus: Large ribosomal subunit protein bL32 (57 aa).

The span at 1 to 20 (MAVPKRRMSRSNTRSRRAQW) shows a compositional bias: basic residues. Residues 1 to 22 (MAVPKRRMSRSNTRSRRAQWKA) are disordered.

The protein belongs to the bacterial ribosomal protein bL32 family.

This is Large ribosomal subunit protein bL32 from Mycobacterium sp. (strain JLS).